Reading from the N-terminus, the 1407-residue chain is Clustered mitochondria protein (1407 aa).

Over residues 1-12 the composition is skewed to basic residues; it reads MAGKSNKSKAKR. 2 disordered regions span residues 1–36 and 83–103; these read MAGK…PVAA and IPKA…PKQG. A compositionally biased stretch (polar residues) spans 14–24; that stretch reads AQSTTTNSTTD. The Clu domain maps to 384–670; that stretch reads PDHKRDAARA…RVTPRDANYT (287 aa). The interval 724–760 is disordered; the sequence is IDGEANGASNSDQKSISDKQNTTAEDYAAGSSESSKS. The segment covering 730 to 747 has biased composition (polar residues); sequence GASNSDQKSISDKQNTTA. 5 TPR repeats span residues 1025 to 1058, 1067 to 1100, 1109 to 1142, 1151 to 1184, and 1193 to 1226; these read AKDL…LQQV, ANCC…NERC, AHSY…LGLS, AATF…NERL, and AVCY…LVKQ. The interval 1358–1407 is disordered; sequence VSSEKGGENGEAKVQEKKESSENGKTENLAPAGLGAGLTSLDKKKQKAKK. The span at 1362–1382 shows a compositional bias: basic and acidic residues; it reads KGGENGEAKVQEKKESSENGK.

This sequence belongs to the CLU family.

Its subcellular location is the cytoplasm. Its function is as follows. mRNA-binding protein involved in proper cytoplasmic distribution of mitochondria. Together with REC2, REC3 and FMT/CLU, contributes to the establishment of the cellular volume devoted to the chloroplast compartment. The polypeptide is Clustered mitochondria protein (Arabidopsis thaliana (Mouse-ear cress)).